The following is a 342-amino-acid chain: Holliday junction branch migration complex subunit RuvB (342 aa).

Residues 1–182 (MRIEALNTAP…FGINSRLDYY (182 aa)) form a large ATPase domain (RuvB-L) region. Residues Ile-21, Arg-22, Gly-63, Lys-66, Thr-67, Thr-68, 129–131 (EDY), Arg-172, Tyr-182, and Arg-219 contribute to the ATP site. Residue Thr-67 coordinates Mg(2+). A small ATPAse domain (RuvB-S) region spans residues 183–253 (SPELLQSIIV…VARRTLESLE (71 aa)). The tract at residues 256-342 (EGGLDDMDKK…DHGPLFDHNS (87 aa)) is head domain (RuvB-H). DNA contacts are provided by Arg-311 and Arg-316.

Belongs to the RuvB family. As to quaternary structure, homohexamer. Forms an RuvA(8)-RuvB(12)-Holliday junction (HJ) complex. HJ DNA is sandwiched between 2 RuvA tetramers; dsDNA enters through RuvA and exits via RuvB. An RuvB hexamer assembles on each DNA strand where it exits the tetramer. Each RuvB hexamer is contacted by two RuvA subunits (via domain III) on 2 adjacent RuvB subunits; this complex drives branch migration. In the full resolvosome a probable DNA-RuvA(4)-RuvB(12)-RuvC(2) complex forms which resolves the HJ.

The protein resides in the cytoplasm. The enzyme catalyses ATP + H2O = ADP + phosphate + H(+). Its function is as follows. The RuvA-RuvB-RuvC complex processes Holliday junction (HJ) DNA during genetic recombination and DNA repair, while the RuvA-RuvB complex plays an important role in the rescue of blocked DNA replication forks via replication fork reversal (RFR). RuvA specifically binds to HJ cruciform DNA, conferring on it an open structure. The RuvB hexamer acts as an ATP-dependent pump, pulling dsDNA into and through the RuvAB complex. RuvB forms 2 homohexamers on either side of HJ DNA bound by 1 or 2 RuvA tetramers; 4 subunits per hexamer contact DNA at a time. Coordinated motions by a converter formed by DNA-disengaged RuvB subunits stimulates ATP hydrolysis and nucleotide exchange. Immobilization of the converter enables RuvB to convert the ATP-contained energy into a lever motion, pulling 2 nucleotides of DNA out of the RuvA tetramer per ATP hydrolyzed, thus driving DNA branch migration. The RuvB motors rotate together with the DNA substrate, which together with the progressing nucleotide cycle form the mechanistic basis for DNA recombination by continuous HJ branch migration. Branch migration allows RuvC to scan DNA until it finds its consensus sequence, where it cleaves and resolves cruciform DNA. The sequence is that of Holliday junction branch migration complex subunit RuvB from Chlorobaculum parvum (strain DSM 263 / NCIMB 8327) (Chlorobium vibrioforme subsp. thiosulfatophilum).